The sequence spans 89 residues: uncharacterized protein (89 aa).

This is an uncharacterized protein from Vaccinia virus (strain Copenhagen) (VACV).